Reading from the N-terminus, the 338-residue chain is Biotin synthase (338 aa).

In terms of domain architecture, Radical SAM core spans 63–290 (NGVQLSTLLS…RAKVRLSAGR (228 aa)). 3 residues coordinate [4Fe-4S] cluster: Cys78, Cys82, and Cys85. [2Fe-2S] cluster is bound by residues Cys122, Cys153, Cys213, and Arg285.

It belongs to the radical SAM superfamily. Biotin synthase family. In terms of assembly, homodimer. It depends on [4Fe-4S] cluster as a cofactor. [2Fe-2S] cluster is required as a cofactor.

It catalyses the reaction (4R,5S)-dethiobiotin + (sulfur carrier)-SH + 2 reduced [2Fe-2S]-[ferredoxin] + 2 S-adenosyl-L-methionine = (sulfur carrier)-H + biotin + 2 5'-deoxyadenosine + 2 L-methionine + 2 oxidized [2Fe-2S]-[ferredoxin]. The protein operates within cofactor biosynthesis; biotin biosynthesis; biotin from 7,8-diaminononanoate: step 2/2. Catalyzes the conversion of dethiobiotin (DTB) to biotin by the insertion of a sulfur atom into dethiobiotin via a radical-based mechanism. In Nitrosomonas eutropha (strain DSM 101675 / C91 / Nm57), this protein is Biotin synthase.